Reading from the N-terminus, the 167-residue chain is Putative pre-16S rRNA nuclease (167 aa).

The tract at residues methionine 1–arginine 24 is disordered. Basic and acidic residues predominate over residues arginine 7–arginine 21.

It belongs to the YqgF nuclease family.

Its subcellular location is the cytoplasm. Its function is as follows. Could be a nuclease involved in processing of the 5'-end of pre-16S rRNA. In Mycolicibacterium paratuberculosis (strain ATCC BAA-968 / K-10) (Mycobacterium paratuberculosis), this protein is Putative pre-16S rRNA nuclease.